The primary structure comprises 107 residues: uncharacterized protein (107 aa).

The N-terminal stretch at 1 to 20 is a signal peptide; it reads MYIKGRLIFFFVVLVIALCS.

This is an uncharacterized protein from Listeria monocytogenes serovar 1/2a (strain ATCC BAA-679 / EGD-e).